We begin with the raw amino-acid sequence, 300 residues long: tRNA pseudouridine synthase B (300 aa).

Asp-38 acts as the Nucleophile in catalysis.

It belongs to the pseudouridine synthase TruB family. Type 1 subfamily.

The catalysed reaction is uridine(55) in tRNA = pseudouridine(55) in tRNA. In terms of biological role, responsible for synthesis of pseudouridine from uracil-55 in the psi GC loop of transfer RNAs. This Anaplasma phagocytophilum (strain HZ) protein is tRNA pseudouridine synthase B.